The sequence spans 479 residues: Protein nucleotidyltransferase YdiU (479 aa).

ATP-binding residues include G83, G85, R86, K106, D118, G119, R169, and R176. Catalysis depends on D245, which acts as the Proton acceptor. Mg(2+) is bound by residues N246 and D255. D255 is a binding site for ATP.

It belongs to the SELO family. It depends on Mg(2+) as a cofactor. Mn(2+) serves as cofactor.

It carries out the reaction L-seryl-[protein] + ATP = 3-O-(5'-adenylyl)-L-seryl-[protein] + diphosphate. The catalysed reaction is L-threonyl-[protein] + ATP = 3-O-(5'-adenylyl)-L-threonyl-[protein] + diphosphate. It catalyses the reaction L-tyrosyl-[protein] + ATP = O-(5'-adenylyl)-L-tyrosyl-[protein] + diphosphate. The enzyme catalyses L-histidyl-[protein] + UTP = N(tele)-(5'-uridylyl)-L-histidyl-[protein] + diphosphate. It carries out the reaction L-seryl-[protein] + UTP = O-(5'-uridylyl)-L-seryl-[protein] + diphosphate. The catalysed reaction is L-tyrosyl-[protein] + UTP = O-(5'-uridylyl)-L-tyrosyl-[protein] + diphosphate. Nucleotidyltransferase involved in the post-translational modification of proteins. It can catalyze the addition of adenosine monophosphate (AMP) or uridine monophosphate (UMP) to a protein, resulting in modifications known as AMPylation and UMPylation. The protein is Protein nucleotidyltransferase YdiU of Erwinia tasmaniensis (strain DSM 17950 / CFBP 7177 / CIP 109463 / NCPPB 4357 / Et1/99).